The chain runs to 306 residues: Palmitoyl-protein thioesterase 1 (306 aa).

The signal sequence occupies residues 1–27; that stretch reads MASSCSRRLLAAALLPWCCAAWALGHL. Cystine bridges form between cysteine 45-cysteine 46, cysteine 96-cysteine 128, and cysteine 152-cysteine 160. Serine 115 is an active-site residue. N-linked (GlcNAc...) asparagine glycosylation is found at asparagine 197, asparagine 212, and asparagine 232. Residues aspartate 233 and histidine 289 contribute to the active site.

Belongs to the palmitoyl-protein thioesterase family. As to quaternary structure, interacts with CLN5, ATP5F1A and ATP5F1B. Post-translationally, glycosylated. Highest level in testis and kidney, lower in heart, brain and lung and lowest in skeletal muscle.

The protein resides in the lysosome. It localises to the secreted. The protein localises to the golgi apparatus. Its subcellular location is the endoplasmic reticulum. It carries out the reaction S-hexadecanoyl-L-cysteinyl-[protein] + H2O = L-cysteinyl-[protein] + hexadecanoate + H(+). It catalyses the reaction hexadecanoyl-CoA + H2O = hexadecanoate + CoA + H(+). The catalysed reaction is S-hexadecanoyl-N-acetylcysteamine + H2O = N-acetylcysteamine + hexadecanoate + H(+). The enzyme catalyses S-hexadecanoyl-N-acetylcysteine methyl ester + H2O = N-acetylcysteine methyl ester + hexadecanoate + H(+). Its function is as follows. Has thioesterase activity against fatty acid thioesters with 14 -18 carbons, including palmitoyl-CoA, S-palmitoyl-N-acetylcysteamine, and palmitoylated proteins. In contrast to PPT2, PPT1 can hydrolyze palmitoylated proteins and palmitoylcysteine. This Mus musculus (Mouse) protein is Palmitoyl-protein thioesterase 1 (Ppt1).